The following is a 241-amino-acid chain: Purine nucleoside phosphorylase DeoD-type 1 (241 aa).

A purine D-ribonucleoside is bound at residue His-5. Phosphate is bound by residues Gly-21, Arg-25, Arg-44, and 88 to 91 (RVGS). A purine D-ribonucleoside is bound by residues 180 to 182 (EME) and 204 to 205 (SD). The active-site Proton donor is the Asp-205.

It belongs to the PNP/UDP phosphorylase family. In terms of assembly, homohexamer; trimer of homodimers.

The catalysed reaction is a purine D-ribonucleoside + phosphate = a purine nucleobase + alpha-D-ribose 1-phosphate. The enzyme catalyses a purine 2'-deoxy-D-ribonucleoside + phosphate = a purine nucleobase + 2-deoxy-alpha-D-ribose 1-phosphate. Its function is as follows. Catalyzes the reversible phosphorolytic breakdown of the N-glycosidic bond in the beta-(deoxy)ribonucleoside molecules, with the formation of the corresponding free purine bases and pentose-1-phosphate. The sequence is that of Purine nucleoside phosphorylase DeoD-type 1 from Vibrio cholerae serotype O1 (strain ATCC 39315 / El Tor Inaba N16961).